A 303-amino-acid polypeptide reads, in one-letter code: Elongation factor Ts (303 aa).

The interval 80–83 is involved in Mg(2+) ion dislocation from EF-Tu; sequence TDFV.

It belongs to the EF-Ts family.

It is found in the cytoplasm. Functionally, associates with the EF-Tu.GDP complex and induces the exchange of GDP to GTP. It remains bound to the aminoacyl-tRNA.EF-Tu.GTP complex up to the GTP hydrolysis stage on the ribosome. This is Elongation factor Ts from Clostridium perfringens (strain ATCC 13124 / DSM 756 / JCM 1290 / NCIMB 6125 / NCTC 8237 / Type A).